We begin with the raw amino-acid sequence, 203 residues long: Putative zinc finger protein 876 (203 aa).

C2H2-type zinc fingers lie at residues Y63–H85, Y91–H113, Y119–H141, and Y147–H169. The C2H2-type 5; degenerate zinc-finger motif lies at Y175 to Q197.

It belongs to the krueppel C2H2-type zinc-finger protein family.

It localises to the nucleus. Its function is as follows. May be involved in transcriptional regulation. This chain is Putative zinc finger protein 876 (ZNF876P), found in Homo sapiens (Human).